The primary structure comprises 67 residues: UPF0437 protein y4xE (67 aa).

Belongs to the UPF0437 family.

This is UPF0437 protein y4xE from Sinorhizobium fredii (strain NBRC 101917 / NGR234).